The sequence spans 343 residues: Glucokinase (343 aa).

18–23 (GDIGGT) is a binding site for ATP.

It belongs to the bacterial glucokinase family.

The protein localises to the cytoplasm. The enzyme catalyses D-glucose + ATP = D-glucose 6-phosphate + ADP + H(+). This Brucella abortus (strain 2308) protein is Glucokinase.